The following is a 243-amino-acid chain: Probable 2-phosphosulfolactate phosphatase (243 aa).

It belongs to the ComB family. Mg(2+) serves as cofactor.

The enzyme catalyses (2R)-O-phospho-3-sulfolactate + H2O = (2R)-3-sulfolactate + phosphate. This Synechococcus sp. (strain CC9605) protein is Probable 2-phosphosulfolactate phosphatase.